The chain runs to 102 residues: Guanyl-specific ribonuclease Pc (102 aa).

2 disulfide bridges follow: C2–C10 and C6–C101. Residue H38 is part of the active site. E56 functions as the Proton acceptor in the catalytic mechanism. The active-site Proton donor is the H90.

It belongs to the ribonuclease N1/T1 family.

The enzyme catalyses [RNA] containing guanosine + H2O = an [RNA fragment]-3'-guanosine-3'-phosphate + a 5'-hydroxy-ribonucleotide-3'-[RNA fragment].. The sequence is that of Guanyl-specific ribonuclease Pc from Penicillium chrysogenum (Penicillium notatum).